The sequence spans 236 residues: Endonuclease NucS (236 aa).

The protein belongs to the NucS endonuclease family.

It is found in the cytoplasm. In terms of biological role, cleaves both 3' and 5' ssDNA extremities of branched DNA structures. In Saccharolobus solfataricus (strain ATCC 35092 / DSM 1617 / JCM 11322 / P2) (Sulfolobus solfataricus), this protein is Endonuclease NucS.